Reading from the N-terminus, the 40-residue chain is Dolichyl-diphosphooligosaccharide--protein glycosyltransferase subunit 4 (40 aa).

Residues 1 to 4 (MITD) are Lumenal-facing. The helical transmembrane segment at 5–25 (VQLAIFSNVLGVFLFLLVVAY) threads the bilayer. Residues 26-40 (HYINANTGKSSIKNK) lie on the Cytoplasmic side of the membrane.

It belongs to the OST4 family. As to quaternary structure, component of the oligosaccharyltransferase (OST) complex.

It is found in the endoplasmic reticulum membrane. Functionally, subunit of the oligosaccharyl transferase (OST) complex that catalyzes the initial transfer of a defined glycan (Glc(3)Man(9)GlcNAc(2) in eukaryotes) from the lipid carrier dolichol-pyrophosphate to an asparagine residue within an Asn-X-Ser/Thr consensus motif in nascent polypeptide chains, the first step in protein N-glycosylation. N-glycosylation occurs cotranslationally and the complex associates with the Sec61 complex at the channel-forming translocon complex that mediates protein translocation across the endoplasmic reticulum (ER). All subunits are required for a maximal enzyme activity. This chain is Dolichyl-diphosphooligosaccharide--protein glycosyltransferase subunit 4, found in Drosophila mojavensis (Fruit fly).